Here is a 406-residue protein sequence, read N- to C-terminus: MNKPVEPNSFRTGPDEQGMFGIFGGRFVAETLMPLILELEEHWNAAKNDPAFKAELQQLGAHYTGRPSPLYFAERLTEHLGGAKVYFKREELNHTGSHKVNNCLGQILLAKRMGKTRIIAETGAGQHGVASATVAARFGLPCVVYMGATDVERQAPNVFRMRLLGAEVKPVTSGHGTLKDAMNEALRDWVTNVEDTYYLIGTAAGPHPYPELVRDFQSVIGQETKEQILAAEGRLPDMLVAAVGGGSNAIGLFHPFLDDKGVAMVGVEAGGKGLEGDEHCASLTAGSPGVLHGNRTYLLQDSDGQIKEGHSISAGLDYPGIGPEHSWLKEAGRVEYVPIMDHEALEAFQLLTRLEGIIPALEPSHALAEVIKRAPKMGKDQIIVMNLSGRGDKDIFAVAKHLKMDV.

Position 99 is an N6-(pyridoxal phosphate)lysine (K99).

Belongs to the TrpB family. As to quaternary structure, tetramer of two alpha and two beta chains. Pyridoxal 5'-phosphate is required as a cofactor.

It carries out the reaction (1S,2R)-1-C-(indol-3-yl)glycerol 3-phosphate + L-serine = D-glyceraldehyde 3-phosphate + L-tryptophan + H2O. It participates in amino-acid biosynthesis; L-tryptophan biosynthesis; L-tryptophan from chorismate: step 5/5. The beta subunit is responsible for the synthesis of L-tryptophan from indole and L-serine. This Chelativorans sp. (strain BNC1) protein is Tryptophan synthase beta chain.